The chain runs to 828 residues: Periplasmic nitrate reductase (828 aa).

Positions 1–32 form a signal peptide, tat-type signal; it reads MNLSRRDFMKANAAMAAATAAGLSIPVKNVEA. The 4Fe-4S Mo/W bis-MGD-type domain maps to 37 to 93; sequence IKWDKAVCRFCGTGCAVLVGTKDGRVVASQGDPDAEVNRGLNCIKGYFLPKIMYGKD. Positions 44, 47, 51, and 79 each coordinate [4Fe-4S] cluster. Mo-bis(molybdopterin guanine dinucleotide) is bound by residues lysine 81, glutamine 148, asparagine 173, cysteine 177, 210–217, 241–245, methionine 371, glutamine 375, asparagine 481, 507–508, lysine 530, aspartate 557, and 717–726; these read WGSNMAEM, STFEH, SD, and TGRVLEHWHT. Residue phenylalanine 793 participates in substrate binding. Positions 801 and 818 each coordinate Mo-bis(molybdopterin guanine dinucleotide).

Belongs to the prokaryotic molybdopterin-containing oxidoreductase family. NasA/NapA/NarB subfamily. In terms of assembly, component of the periplasmic nitrate reductase NapAB complex composed of NapA and NapB. The cofactor is [4Fe-4S] cluster. Mo-bis(molybdopterin guanine dinucleotide) serves as cofactor. In terms of processing, predicted to be exported by the Tat system. The position of the signal peptide cleavage has not been experimentally proven.

The protein localises to the periplasm. The enzyme catalyses 2 Fe(II)-[cytochrome] + nitrate + 2 H(+) = 2 Fe(III)-[cytochrome] + nitrite + H2O. Its function is as follows. Catalytic subunit of the periplasmic nitrate reductase complex NapAB. Receives electrons from NapB and catalyzes the reduction of nitrate to nitrite. The protein is Periplasmic nitrate reductase of Aggregatibacter actinomycetemcomitans (Actinobacillus actinomycetemcomitans).